The primary structure comprises 138 residues: Large ribosomal subunit protein uL16m (138 aa).

It belongs to the universal ribosomal protein uL16 family.

The protein localises to the mitochondrion. In Chondrus crispus (Carrageen Irish moss), this protein is Large ribosomal subunit protein uL16m (RPL16).